Here is a 595-residue protein sequence, read N- to C-terminus: CDPK-related kinase 3 (595 aa).

The tract at residues 1 to 131 is disordered; the sequence is MGQCYGKVNQ…GTEPEQSLDK (131 aa). The N-myristoyl glycine moiety is linked to residue Gly2. The segment covering 20–37 has biased composition (polar residues); that stretch reads NTTTYVVSGDGNQIQPLT. Positions 111–124 are enriched in basic and acidic residues; the sequence is KPKEGPIPEERGTE. Residues 143-405 form the Protein kinase domain; that stretch reads YELGKEVGRG…AVQALTHPWL (263 aa). Residues 149–157 and Lys175 contribute to the ATP site; that span reads VGRGHFGHT. Asp271 acts as the Proton acceptor in catalysis. Ser311 carries the post-translational modification Phosphoserine. Ser353 bears the Phosphoserine; by CPK1 and CPK34 mark. An autoinhibitory domain region spans residues 409-439; that stretch reads SRVIPLDILIYKLVKAYLHATPLRRAALKAL. Positions 428–448 are calmodulin binding (CaMBD); sequence ATPLRRAALKALAKALTENEL. EF-hand domains lie at 446-482, 483-518, 519-558, and 559-588; these read NELVYLRAQFMLLGPNKDGSVSLENFKTALMQNATDA, MRESRVPEILHTMESLAYRKMYFEEFCAAAISIHQL, EAVDAWEEIATAGFQHFETEGNRVITIEELARELNVGASA, and YGHLRDWVRSSDGKLSYLGFTKFLHGVTLR. Positions 461, 463, 465, 502, 507, 540, 547, 568, 570, and 572 each coordinate Ca(2+). Position 574 is a phosphoserine (Ser574).

The protein belongs to the protein kinase superfamily. Ser/Thr protein kinase family. CDPK subfamily. In terms of assembly, binds calmodulin (CaM) in a calcium-dependent manner. Interacts with GLN1-1. In terms of processing, autophosphorylated. Ubiquitously expressed with higher levels in siliques and roots, especially at the root cap. Particularly present in vascular bundles of stems and leaves.

It localises to the cytoplasm. The protein resides in the membrane. It carries out the reaction L-seryl-[protein] + ATP = O-phospho-L-seryl-[protein] + ADP + H(+). It catalyses the reaction L-threonyl-[protein] + ATP = O-phospho-L-threonyl-[protein] + ADP + H(+). With respect to regulation, not activated by calcium. Autophosphorylation may play an important role in the regulation of the kinase activity. Stimulated by magnesium ions (optimum at 10-15 mM) and manganese ions. May play a role in signal transduction pathways that involve calcium as a second messenger. Serine/threonine kinase that phosphorylates histone H3 an GLN1-1. The protein is CDPK-related kinase 3 (CRK3) of Arabidopsis thaliana (Mouse-ear cress).